The following is a 384-amino-acid chain: Dual-specificity RNA methyltransferase RlmN (384 aa).

The Proton acceptor role is filled by Glu93. The Radical SAM core domain maps to 99-339 (EETRGTLCVS…TTIRKTRGDD (241 aa)). Cys106 and Cys344 form a disulfide bridge. [4Fe-4S] cluster contacts are provided by Cys113, Cys117, and Cys120. Residues 170–171 (GE), Ser202, 224–226 (SLH), and Asn301 contribute to the S-adenosyl-L-methionine site. Cys344 (S-methylcysteine intermediate) is an active-site residue.

Belongs to the radical SAM superfamily. RlmN family. Requires [4Fe-4S] cluster as cofactor.

It localises to the cytoplasm. The catalysed reaction is adenosine(2503) in 23S rRNA + 2 reduced [2Fe-2S]-[ferredoxin] + 2 S-adenosyl-L-methionine = 2-methyladenosine(2503) in 23S rRNA + 5'-deoxyadenosine + L-methionine + 2 oxidized [2Fe-2S]-[ferredoxin] + S-adenosyl-L-homocysteine. The enzyme catalyses adenosine(37) in tRNA + 2 reduced [2Fe-2S]-[ferredoxin] + 2 S-adenosyl-L-methionine = 2-methyladenosine(37) in tRNA + 5'-deoxyadenosine + L-methionine + 2 oxidized [2Fe-2S]-[ferredoxin] + S-adenosyl-L-homocysteine. Functionally, specifically methylates position 2 of adenine 2503 in 23S rRNA and position 2 of adenine 37 in tRNAs. m2A2503 modification seems to play a crucial role in the proofreading step occurring at the peptidyl transferase center and thus would serve to optimize ribosomal fidelity. This is Dual-specificity RNA methyltransferase RlmN from Cupriavidus necator (strain ATCC 17699 / DSM 428 / KCTC 22496 / NCIMB 10442 / H16 / Stanier 337) (Ralstonia eutropha).